A 189-amino-acid polypeptide reads, in one-letter code: Phosphoheptose isomerase (189 aa).

An SIS domain is found at 34 to 189 (LVDALGNGKK…CDLLEKRLFG (156 aa)). A substrate-binding site is contributed by 49–51 (NGG). The Zn(2+) site is built by His58 and Glu62. Residues Glu62, 91-92 (ND), 117-119 (STS), Ser122, and Gln169 contribute to the substrate site. Positions 169 and 177 each coordinate Zn(2+).

This sequence belongs to the SIS family. GmhA subfamily. In terms of assembly, homotetramer. The cofactor is Zn(2+).

The protein resides in the cytoplasm. The catalysed reaction is 2 D-sedoheptulose 7-phosphate = D-glycero-alpha-D-manno-heptose 7-phosphate + D-glycero-beta-D-manno-heptose 7-phosphate. It participates in carbohydrate biosynthesis; D-glycero-D-manno-heptose 7-phosphate biosynthesis; D-glycero-alpha-D-manno-heptose 7-phosphate and D-glycero-beta-D-manno-heptose 7-phosphate from sedoheptulose 7-phosphate: step 1/1. Functionally, catalyzes the isomerization of sedoheptulose 7-phosphate in D-glycero-D-manno-heptose 7-phosphate. The chain is Phosphoheptose isomerase from Geotalea uraniireducens (strain Rf4) (Geobacter uraniireducens).